The chain runs to 609 residues: RAS guanyl-releasing protein 2 (609 aa).

A lipid anchor (N-myristoyl glycine) is attached at Ala-2. Residues 4–126 (TLDLDKGCTV…SLIDIDSVPT (123 aa)) form the N-terminal Ras-GEF domain. A lipid anchor (S-palmitoyl cysteine) is attached at Leu-7. Ser-116, Ser-117, and Ser-147 each carry phosphoserine. Residues 154 to 387 (EPMELAEHLT…YQLSLQREPR (234 aa)) enclose the Ras-GEF domain. The disordered stretch occupies residues 382-406 (LQREPRSKSSPTSPTSCTPPPRPPV). EF-hand domains lie at 426 to 461 (HIEKMVESVFRNFDVDGDGHISQEEFQIIRGNFPYL) and 455 to 490 (RGNFPYLSAFGDLDQNQDGCISREEMVSYFLRSSSV). Residues Asp-439, Asp-441, Asp-443, His-445, Glu-450, Asp-468, Asn-470, Asp-472, Cys-474, and Glu-479 each coordinate Ca(2+). The segment at 498–548 (VHNFQESNSLRPVACRHCKALILGIYKQGLKCRACGVNCHKQCKDRLSVEC) adopts a Phorbol-ester/DAG-type zinc-finger fold. Phosphoserine is present on residues Ser-554 and Ser-576. The interval 557–592 (LEGSAPSPSPMHSHHHRAFSFSLPRPGRRGSRPPEI) is disordered.

This sequence belongs to the RASGRP family. As to quaternary structure, forms a signaling complex with RAP1 and BRAF. Interacts with RAP1. Interacts with F-actin. Post-translationally, isoform 2 is palmitoylated and myristoylated. As to expression, detected in platelets, neutrophils and T lymphocytes (at protein level). Expressed in brain where it is enriched in the striatum. Also expressed in the hematopoietic system. Detected in heart, brain, lung, placenta, liver, skeletal muscle and kidney.

The protein resides in the cytoplasm. The protein localises to the cytosol. It localises to the cell membrane. It is found in the synapse. Its subcellular location is the synaptosome. The protein resides in the cell projection. The protein localises to the ruffle membrane. With respect to regulation, isoform 1 and isoform 2 are differently regulated by calcium and DAG. Functions as a calcium- and DAG-regulated nucleotide exchange factor specifically activating Rap through the exchange of bound GDP for GTP. May also activate other GTPases such as RRAS, RRAS2, NRAS, KRAS but not HRAS. Functions in aggregation of platelets and adhesion of T-lymphocytes and neutrophils probably through inside-out integrin activation. May function in the muscarinic acetylcholine receptor M1/CHRM1 signaling pathway. This Homo sapiens (Human) protein is RAS guanyl-releasing protein 2 (RASGRP2).